Here is a 577-residue protein sequence, read N- to C-terminus: DEAD-box ATP-dependent RNA helicase 22 (577 aa).

Positions 82–110 match the Q motif motif; it reads TSWESLGVSDRLASALHGAGLARPSLVQA. Positions 113 to 375 constitute a Helicase ATP-binding domain; sequence IPHVLTTNDV…GGVLKRMFPN (263 aa). 126–133 provides a ligand contact to ATP; the sequence is AETGSGKT. A DEAD box motif is present at residues 249–252; that stretch reads DEAD. The segment at 288-317 is disordered; it reads SLGDTNEYREDSDSQSAELSADDEENEDGL. The region spanning 407 to 568 is the Helicase C-terminal domain; that stretch reads LLDAVKYGLK…SFRNKLKKQA (162 aa).

Belongs to the DEAD box helicase family.

The enzyme catalyses ATP + H2O = ADP + phosphate + H(+). The sequence is that of DEAD-box ATP-dependent RNA helicase 22 from Oryza sativa subsp. japonica (Rice).